The primary structure comprises 90 residues: Antitoxin epsilon 2 (90 aa).

Belongs to the epsilon antitoxin family. In terms of assembly, in the presence of the zeta toxin, forms an inactive PezA(2)PezT(2) heterotetramer.

Its function is as follows. Antitoxin component of a type II toxin-antitoxin (TA) system. Neutralizes the toxic effect of zeta toxin. Part of a postsegregational killing (PSK) system involved in the killing of plasmid-free cells. Continuous synthesis of the epsilon antitoxin is required to counteract the zeta toxin. This Enterococcus faecalis (Streptococcus faecalis) protein is Antitoxin epsilon 2.